A 688-amino-acid chain; its full sequence is Elongation factor G (688 aa).

A tr-type G domain is found at 8–282 (EKFRNFGIMA…GVVDYLPSPL (275 aa)). Residues 17–24 (AHIDAGKT), 81–85 (DTPGH), and 135–138 (NKMD) contribute to the GTP site.

Belongs to the TRAFAC class translation factor GTPase superfamily. Classic translation factor GTPase family. EF-G/EF-2 subfamily.

The protein resides in the cytoplasm. Catalyzes the GTP-dependent ribosomal translocation step during translation elongation. During this step, the ribosome changes from the pre-translocational (PRE) to the post-translocational (POST) state as the newly formed A-site-bound peptidyl-tRNA and P-site-bound deacylated tRNA move to the P and E sites, respectively. Catalyzes the coordinated movement of the two tRNA molecules, the mRNA and conformational changes in the ribosome. The chain is Elongation factor G from Clostridium perfringens (strain 13 / Type A).